We begin with the raw amino-acid sequence, 205 residues long: Urease accessory protein UreG (205 aa).

11 to 18 (GPVGSGKT) is a binding site for GTP.

This sequence belongs to the SIMIBI class G3E GTPase family. UreG subfamily. In terms of assembly, homodimer. UreD, UreF and UreG form a complex that acts as a GTP-hydrolysis-dependent molecular chaperone, activating the urease apoprotein by helping to assemble the nickel containing metallocenter of UreC. The UreE protein probably delivers the nickel.

It localises to the cytoplasm. In terms of biological role, facilitates the functional incorporation of the urease nickel metallocenter. This process requires GTP hydrolysis, probably effectuated by UreG. The protein is Urease accessory protein UreG of Prochlorococcus marinus (strain NATL2A).